We begin with the raw amino-acid sequence, 670 residues long: Probable plastid-lipid-associated protein 14, chloroplastic (670 aa).

The transit peptide at 1 to 52 (MALCGVCSTPNLPNLQVFRSVRNSSIGYKRNHSLWQLRSSSFRAKSVIFHCS) directs the protein to the chloroplast. In terms of domain architecture, Protein kinase spans 88 to 399 (FRILDRVSIG…CLDALKHPFL (312 aa)).

The protein belongs to the PAP/fibrillin family. In terms of processing, not autophosphorylated. Expressed in roots.

It localises to the plastid. Its subcellular location is the chloroplast. Directly regulated by DOF3.6/OBP3; unknown function. This Arabidopsis thaliana (Mouse-ear cress) protein is Probable plastid-lipid-associated protein 14, chloroplastic (PAP14).